The chain runs to 141 residues: Large ribosomal subunit protein uL11 (141 aa).

This sequence belongs to the universal ribosomal protein uL11 family. Part of the ribosomal stalk of the 50S ribosomal subunit. Interacts with L10 and the large rRNA to form the base of the stalk. L10 forms an elongated spine to which L12 dimers bind in a sequential fashion forming a multimeric L10(L12)X complex. One or more lysine residues are methylated.

In terms of biological role, forms part of the ribosomal stalk which helps the ribosome interact with GTP-bound translation factors. The polypeptide is Large ribosomal subunit protein uL11 (Ruegeria sp. (strain TM1040) (Silicibacter sp.)).